A 286-amino-acid polypeptide reads, in one-letter code: Homoserine kinase (286 aa).

Residue 78–88 (PLARGLGSSSS) participates in ATP binding.

Belongs to the GHMP kinase family. Homoserine kinase subfamily.

It is found in the cytoplasm. The catalysed reaction is L-homoserine + ATP = O-phospho-L-homoserine + ADP + H(+). Its pathway is amino-acid biosynthesis; L-threonine biosynthesis; L-threonine from L-aspartate: step 4/5. Functionally, catalyzes the ATP-dependent phosphorylation of L-homoserine to L-homoserine phosphate. The protein is Homoserine kinase of Streptococcus equi subsp. equi (strain 4047).